The sequence spans 474 residues: ATP synthase subunit beta (474 aa).

An ATP-binding site is contributed by 152 to 159 (GGAGVGKT).

This sequence belongs to the ATPase alpha/beta chains family. In terms of assembly, F-type ATPases have 2 components, CF(1) - the catalytic core - and CF(0) - the membrane proton channel. CF(1) has five subunits: alpha(3), beta(3), gamma(1), delta(1), epsilon(1). CF(0) has three main subunits: a(1), b(2) and c(9-12). The alpha and beta chains form an alternating ring which encloses part of the gamma chain. CF(1) is attached to CF(0) by a central stalk formed by the gamma and epsilon chains, while a peripheral stalk is formed by the delta and b chains.

It is found in the cell inner membrane. It carries out the reaction ATP + H2O + 4 H(+)(in) = ADP + phosphate + 5 H(+)(out). Its function is as follows. Produces ATP from ADP in the presence of a proton gradient across the membrane. The catalytic sites are hosted primarily by the beta subunits. The polypeptide is ATP synthase subunit beta (Magnetococcus marinus (strain ATCC BAA-1437 / JCM 17883 / MC-1)).